The primary structure comprises 132 residues: Large ribosomal subunit protein eL28 (132 aa).

It belongs to the eukaryotic ribosomal protein eL28 family.

This is Large ribosomal subunit protein eL28 (rpl28) from Dictyostelium discoideum (Social amoeba).